The chain runs to 105 residues: MFAVIKAGGKQYKVDRNSVIKVEKIDGELGSKIQFDQILMIGEYSKPSFIGTPIVKGAIVTAEITNQLKDNKIIAFKKKRRKNYRRKAGHRQELTELKILDITKQ.

The protein belongs to the bacterial ribosomal protein bL21 family. Part of the 50S ribosomal subunit. Contacts protein L20.

In terms of biological role, this protein binds to 23S rRNA in the presence of protein L20. This chain is Large ribosomal subunit protein bL21, found in Rickettsia prowazekii (strain Madrid E).